We begin with the raw amino-acid sequence, 317 residues long: MSTLEPAAQSKPPGGFKLWLSQLQMKHGRKLVIALPYIWLILLFLLPFLIVFKISLAEMARAIPPYTELMEWADGQLSITLNLGNFLQLTDDPLYFDAYLQSLQVAAISTFCCLLIGYPLAWAVAHSKPSTRNILLLLVILPSWTSFLIRVYAWMGILKNNGVLNNFLLWLGVIDQPLTILHTNLAVYIGIVYAYVPFMVLPIYTALIRIDYSLVEAALDLGARPLKTFFTVIVPLTKGGIIAGSMLVFIPAVGEFVIPELLGGPDSIMIGRVLWQEFFNNRDWPVASAVAIIMLLLLIVPIMWFHKHQQKSVGEHG.

At 1 to 31 (MSTLEPAAQSKPPGGFKLWLSQLQMKHGRKL) the chain is on the cytoplasmic side. Residues 32–51 (VIALPYIWLILLFLLPFLIV) traverse the membrane as a helical segment. Residues 52–104 (FKISLAEMARAIPPYTELMEWADGQLSITLNLGNFLQLTDDPLYFDAYLQSLQ) are Periplasmic-facing. Residues 99-305 (YLQSLQVAAI…LLLIVPIMWF (207 aa)) enclose the ABC transmembrane type-1 domain. A helical transmembrane segment spans residues 105–124 (VAAISTFCCLLIGYPLAWAV). Over 125–133 (AHSKPSTRN) the chain is Cytoplasmic. The chain crosses the membrane as a helical span at residues 134-153 (ILLLLVILPSWTSFLIRVYA). Topologically, residues 154-184 (WMGILKNNGVLNNFLLWLGVIDQPLTILHTN) are periplasmic. Residues 185–204 (LAVYIGIVYAYVPFMVLPIY) traverse the membrane as a helical segment. Residues 205–239 (TALIRIDYSLVEAALDLGARPLKTFFTVIVPLTKG) are Cytoplasmic-facing. A helical transmembrane segment spans residues 240-259 (GIIAGSMLVFIPAVGEFVIP). Over 260–284 (ELLGGPDSIMIGRVLWQEFFNNRDW) the chain is Periplasmic. Residues 285–304 (PVASAVAIIMLLLLIVPIMW) form a helical membrane-spanning segment. Residues 305-317 (FHKHQQKSVGEHG) lie on the Cytoplasmic side of the membrane.

It belongs to the binding-protein-dependent transport system permease family. CysTW subfamily. In terms of assembly, the complex is composed of two ATP-binding proteins (PotG), two transmembrane proteins (PotH and PotI) and a solute-binding protein (PotF).

The protein resides in the cell inner membrane. Transport is feedback inhibited by intracellular polyamines. Its function is as follows. Part of the ABC transporter complex PotFGHI involved in putrescine uptake. Responsible for the translocation of the substrate across the membrane. Imports putrescine for maintenance of the optimal concentration of polyamines necessary for cell growth in the presence of glucose. The polypeptide is Putrescine transport system permease protein PotH (Escherichia coli (strain K12)).